The following is a 173-amino-acid chain: Calcium-binding protein 5 (173 aa).

4 consecutive EF-hand domains span residues 28 to 63 (DEIE…MGYM), 82 to 99 (GRVD…KLLA), 105 to 140 (IGVQ…LLGD), and 142 to 173 (LTSQ…MMSR). D41, D43, D45, and D52 together coordinate Ca(2+). Ca(2+) contacts are provided by D118, N120, D122, E124, E129, D155, N157, D159, T161, and E166.

Interacts with CACNA1C (via C-terminal CDB motif) in a calcium-dependent manner. Interacts with STXBP1. Interacts with MYO6. Expressed in the retina (at protein level).

The protein localises to the cytoplasm. In terms of biological role, inhibits calcium-dependent inactivation of L-type calcium channel and shifts voltage dependence of activation to more depolarized membrane potentials. Involved in the transmission of light signals. May positively regulate neurotransmitter vesicle endocytosis and exocytosis in a salt-dependent manner. May play a role in the extension and network organization of neurites. In Bos taurus (Bovine), this protein is Calcium-binding protein 5 (CABP5).